The following is a 396-amino-acid chain: Phosphoglycerate kinase (396 aa).

Residues 21-23 (DFN), Arg-36, 59-62 (HLGK), Arg-119, and Arg-156 each bind substrate. ATP contacts are provided by residues Lys-206, Gly-294, Glu-325, and 352 to 355 (GGDS).

Belongs to the phosphoglycerate kinase family. Monomer.

It is found in the cytoplasm. It carries out the reaction (2R)-3-phosphoglycerate + ATP = (2R)-3-phospho-glyceroyl phosphate + ADP. The protein operates within carbohydrate degradation; glycolysis; pyruvate from D-glyceraldehyde 3-phosphate: step 2/5. This is Phosphoglycerate kinase from Listeria monocytogenes serotype 4a (strain HCC23).